Reading from the N-terminus, the 338-residue chain is MKDKLEALLDQALSELAQASTEEGVQELRVKYLGKKGELTSVMKGLGALTPEERPIIGQVVNTVKGKLEEGFELRGGEIREAVKSARLSAERIDVTLPGRRRPLGSKHPITLVTEEIASIFGALGFAVAEGPEIELDFYNFEALNLPKDHPARDMQDTFYFGESVLLRTHTSPVQIRTMLKQPPPVRIIAPGTVYRCDSDATHSPMFHQVEGLMVDKGITFGDLKGILTLFISQLFGSDIGVRLRPSFFPFTEPSAEVDIACVICRGKGCRVCKETGWLEILGAGMVDPEVYRHVGYDSELYTGFAFGMGIERIAMLKYGIADMRLLFENDLRFLKQF.

A Mg(2+)-binding site is contributed by Glu-253.

Belongs to the class-II aminoacyl-tRNA synthetase family. Phe-tRNA synthetase alpha subunit type 1 subfamily. In terms of assembly, tetramer of two alpha and two beta subunits. It depends on Mg(2+) as a cofactor.

It is found in the cytoplasm. It carries out the reaction tRNA(Phe) + L-phenylalanine + ATP = L-phenylalanyl-tRNA(Phe) + AMP + diphosphate + H(+). The chain is Phenylalanine--tRNA ligase alpha subunit from Geobacter sp. (strain M21).